Here is a 222-residue protein sequence, read N- to C-terminus: Prolactin-2C5 (222 aa).

An N-terminal signal peptide occupies residues 1 to 29 (MLPSLIQPCSWILLLLLVNSSLLWKNVAS). An intrachain disulfide couples Cys33 to Cys40. Residue Asn57 is glycosylated (N-linked (GlcNAc...) asparagine). 2 disulfides stabilise this stretch: Cys87-Cys197 and Cys214-Cys222.

The protein belongs to the somatotropin/prolactin family. Post-translationally, N-glycosylated and sialylated. In terms of tissue distribution, expressed in placenta (at protein level). Expressed in the tail hair follicle, with highest expression detected in the keratinocytes of the outer root sheath. Expressed in ear skin with lesser amounts in small intestine. Not detected in brain at 18 dpc, postnatal day 25 or postnatal day 55.

Its subcellular location is the secreted. This chain is Prolactin-2C5, found in Mus musculus (Mouse).